Consider the following 357-residue polypeptide: UDP-N-acetylglucosamine--N-acetylmuramyl-(pentapeptide) pyrophosphoryl-undecaprenol N-acetylglucosamine transferase (357 aa).

UDP-N-acetyl-alpha-D-glucosamine is bound by residues 13-15 (TGG), Asn125, Arg161, Ser189, Ile243, and Gln288.

The protein belongs to the glycosyltransferase 28 family. MurG subfamily.

It localises to the cell inner membrane. The enzyme catalyses di-trans,octa-cis-undecaprenyl diphospho-N-acetyl-alpha-D-muramoyl-L-alanyl-D-glutamyl-meso-2,6-diaminopimeloyl-D-alanyl-D-alanine + UDP-N-acetyl-alpha-D-glucosamine = di-trans,octa-cis-undecaprenyl diphospho-[N-acetyl-alpha-D-glucosaminyl-(1-&gt;4)]-N-acetyl-alpha-D-muramoyl-L-alanyl-D-glutamyl-meso-2,6-diaminopimeloyl-D-alanyl-D-alanine + UDP + H(+). The protein operates within cell wall biogenesis; peptidoglycan biosynthesis. Functionally, cell wall formation. Catalyzes the transfer of a GlcNAc subunit on undecaprenyl-pyrophosphoryl-MurNAc-pentapeptide (lipid intermediate I) to form undecaprenyl-pyrophosphoryl-MurNAc-(pentapeptide)GlcNAc (lipid intermediate II). In Bordetella petrii (strain ATCC BAA-461 / DSM 12804 / CCUG 43448), this protein is UDP-N-acetylglucosamine--N-acetylmuramyl-(pentapeptide) pyrophosphoryl-undecaprenol N-acetylglucosamine transferase.